A 382-amino-acid chain; its full sequence is Lipid-A-disaccharide synthase (382 aa).

Belongs to the LpxB family.

The catalysed reaction is 2-N,3-O-bis[(3R)-3-hydroxytetradecanoyl]-alpha-D-glucosaminyl 1-phosphate + UDP-2-N,3-O-bis[(3R)-3-hydroxytetradecanoyl]-alpha-D-glucosamine = lipid A disaccharide (E. coli) + UDP + H(+). It carries out the reaction a lipid X + a UDP-2-N,3-O-bis[(3R)-3-hydroxyacyl]-alpha-D-glucosamine = a lipid A disaccharide + UDP + H(+). The protein operates within glycolipid biosynthesis; lipid IV(A) biosynthesis; lipid IV(A) from (3R)-3-hydroxytetradecanoyl-[acyl-carrier-protein] and UDP-N-acetyl-alpha-D-glucosamine: step 5/6. Functionally, condensation of UDP-2,3-diacylglucosamine and 2,3-diacylglucosamine-1-phosphate to form lipid A disaccharide, a precursor of lipid A, a phosphorylated glycolipid that anchors the lipopolysaccharide to the outer membrane of the cell. The polypeptide is Lipid-A-disaccharide synthase (Salmonella arizonae (strain ATCC BAA-731 / CDC346-86 / RSK2980)).